Here is a 959-residue protein sequence, read N- to C-terminus: Translation initiation factor IF-2 (959 aa).

Residues 1–10 are compositionally biased toward basic and acidic residues; that stretch reads MSDKTNDDKT. Residues 1–374 form a disordered region; that stretch reads MSDKTNDDKT…SQMQETREKI (374 aa). Residues 27–37 show a composition bias toward polar residues; that stretch reads EQSTVRQNFSH. 2 stretches are compositionally biased toward low complexity: residues 63–118 and 128–138; these read AAAA…VTKP and QRPGGQQAQRP. Basic and acidic residues-rich tracts occupy residues 154–225 and 232–241; these read SEMD…EAAK and ARSERRDDAR. The span at 246-284 shows a compositional bias: low complexity; it reads GARPQQAGRPQGGRPQPAGRPQQGSPRPAPIIADAAPIA. The span at 318–333 shows a compositional bias: basic and acidic residues; it reads PEVRAPKVVKGEDDRR. The tr-type G domain maps to 457-626; it reads SRPPVVTIMG…LLQAEMLDLK (170 aa). Residues 466-473 form a G1 region; sequence GHVDHGKT. 466 to 473 is a binding site for GTP; the sequence is GHVDHGKT. Positions 491 to 495 are G2; the sequence is GITQH. Residues 512-515 form a G3 region; sequence DTPG. Residues 512 to 516 and 566 to 569 each bind GTP; these read DTPGH and NKID. A G4 region spans residues 566 to 569; sequence NKID. The interval 602-604 is G5; the sequence is SAK.

Belongs to the TRAFAC class translation factor GTPase superfamily. Classic translation factor GTPase family. IF-2 subfamily.

Its subcellular location is the cytoplasm. In terms of biological role, one of the essential components for the initiation of protein synthesis. Protects formylmethionyl-tRNA from spontaneous hydrolysis and promotes its binding to the 30S ribosomal subunits. Also involved in the hydrolysis of GTP during the formation of the 70S ribosomal complex. In Brucella ovis (strain ATCC 25840 / 63/290 / NCTC 10512), this protein is Translation initiation factor IF-2.